The following is a 460-amino-acid chain: Serine incorporator 5 (460 aa).

Over 1 to 36 the chain is Extracellular; sequence MSARCCAGQLACCCGSAGCALCCGCCPKFRQSRSTR. The chain crosses the membrane as a helical span at residues 37–57; that stretch reads FMYLFYFTLVIIPCCVMMSPS. Residues 58 to 89 lie on the Cytoplasmic side of the membrane; it reads VMKQMTEHIPFFEDFCKGIKAGDTCENLVGYS. Residues 90-110 traverse the membrane as a helical segment; the sequence is AVYRVCFGMACFFFVFCVLTF. The Extracellular segment spans residues 111–124; it reads KVNNSKSCRASIHN. Asn-113 carries an N-linked (GlcNAc...) asparagine glycan. A helical transmembrane segment spans residues 125–145; it reads GFWFFKLLLLGAMCSGAFFIP. The Cytoplasmic segment spans residues 146–156; it reads DQETFLNVWRY. Residues 157–177 form a helical membrane-spanning segment; that stretch reads VGAVGSFFFICIQLLLIVEFA. Over 178 to 197 the chain is Extracellular; sequence HKWNKNWTAGTVRNKLWYAS. Residue Asn-183 is glycosylated (N-linked (GlcNAc...) asparagine). Residues 198 to 218 form a helical membrane-spanning segment; it reads LSLALIMYSIAVGGLALMAVF. Topologically, residues 219 to 229 are cytoplasmic; that stretch reads YTQWDDCMDNK. Residues 230–250 traverse the membrane as a helical segment; it reads ILLGVHGGLCVLISLAAISPC. Residues 251–258 lie on the Extracellular side of the membrane; it reads VQNRQPHS. The chain crosses the membrane as a helical span at residues 259–279; the sequence is GLLQPGLISCYVTYLTFSALT. Residues 280–309 are Cytoplasmic-facing; the sequence is SKPEKVVKDEHGKNVTICVPDFGQDFRRDE. The chain crosses the membrane as a helical span at residues 310–330; the sequence is SMVTWLGTLLLVVCISYSCLT. The Extracellular segment spans residues 331–390; that stretch reads STTRSSSDALQRRYGAPELEVARCCFCFGPDGEDTEEQQNVKEGPRVIYDEKKGTVYSYS. Residues 391–411 form a helical membrane-spanning segment; it reads YFHFVLLLASLYVMMTLTSWF. The Cytoplasmic segment spans residues 412-427; the sequence is HYENATIETFFVGSWS. Residues 428-448 traverse the membrane as a helical segment; sequence IFWVKMASCWMCVLLYLWTLV. Over 449-460 the chain is Extracellular; it reads APLCCPSRQFSV.

This sequence belongs to the TDE1 family. As to expression, brain. Expressed at high levels in the white matter and the oligodendroglial cells of the brain. Expressed at low levels in the liver.

It is found in the cell membrane. The catalysed reaction is a 1,2-diacyl-sn-glycero-3-phospho-L-serine(in) = a 1,2-diacyl-sn-glycero-3-phospho-L-serine(out). It catalyses the reaction a 1,2-diacyl-sn-glycero-3-phosphocholine(in) = a 1,2-diacyl-sn-glycero-3-phosphocholine(out). The enzyme catalyses a 1,2-diacyl-sn-glycero-3-phosphoethanolamine(in) = a 1,2-diacyl-sn-glycero-3-phosphoethanolamine(out). In terms of biological role, restriction factor required to restrict infectivity of gammaretroviruses: acts by inhibiting an early step of viral infection. Impairs the penetration of the viral particle into the cytoplasm. Non-ATP-dependent, non-specific lipid transporter for phosphatidylserine, phosphatidylcholine, and phosphatidylethanolamine. Functions as a scramblase that flips lipids in both directions across the membrane. Phospholipid scrambling results in gammaretroviral surface exposure of phosphatidylserine and loss of membrane asymmetry, which leads to loss of infectivity. Enhances the incorporation of serine into phosphatidylserine and sphingolipids. May play a role in providing serine molecules for the formation of myelin glycosphingolipids in oligodendrocytes. The chain is Serine incorporator 5 (Serinc5) from Rattus norvegicus (Rat).